The chain runs to 404 residues: Phosphopentomutase (404 aa).

Aspartate 10, aspartate 303, histidine 308, aspartate 344, histidine 345, and histidine 356 together coordinate Mn(2+).

This sequence belongs to the phosphopentomutase family. Requires Mn(2+) as cofactor.

It is found in the cytoplasm. It carries out the reaction 2-deoxy-alpha-D-ribose 1-phosphate = 2-deoxy-D-ribose 5-phosphate. The enzyme catalyses alpha-D-ribose 1-phosphate = D-ribose 5-phosphate. The protein operates within carbohydrate degradation; 2-deoxy-D-ribose 1-phosphate degradation; D-glyceraldehyde 3-phosphate and acetaldehyde from 2-deoxy-alpha-D-ribose 1-phosphate: step 1/2. In terms of biological role, isomerase that catalyzes the conversion of deoxy-ribose 1-phosphate (dRib-1-P) and ribose 1-phosphate (Rib-1-P) to deoxy-ribose 5-phosphate (dRib-5-P) and ribose 5-phosphate (Rib-5-P), respectively. This Shewanella sp. (strain MR-4) protein is Phosphopentomutase.